A 188-amino-acid chain; its full sequence is UPF0340 protein GK3370 (188 aa).

The protein belongs to the UPF0340 family.

This is UPF0340 protein GK3370 from Geobacillus kaustophilus (strain HTA426).